A 1930-amino-acid polypeptide reads, in one-letter code: Transport and Golgi organization protein 1 homolog (1930 aa).

A signal peptide spans 1 to 24; that stretch reads MAAAPGLLFWLFVLGALWWVPGQS. Residues 25-1171 are Lumenal-facing; that stretch reads DLSHGRRFSD…EPAAVPPLES (1147 aa). The SH3 domain maps to 45 to 107; the sequence is MLMYRGKALE…PKDLIKVLHK (63 aa). Disordered regions lie at residues 144–263, 317–496, 547–737, 754–891, and 1018–1149; these read LELE…REKT, EEEE…AAEK, LGSS…MNSQ, TKQP…TPEI, and TAPL…PVGA. The span at 152–189 shows a compositional bias: basic and acidic residues; the sequence is EESKKAEEVSQHREKSPEESRGRELDPVPEPEAFRADS. Over residues 197-211 the composition is skewed to polar residues; that stretch reads SESTEGLQGQPSAQE. The residue at position 229 (Ser-229) is a Phosphoserine. Residues 247–256 show a composition bias toward polar residues; the sequence is ESRTGNSSPA. The span at 317–330 shows a compositional bias: acidic residues; the sequence is EEEEEVEEDADSSD. Over residues 338 to 368 the composition is skewed to basic and acidic residues; sequence SDKDEKVPGKPMIEKYLTDKDPNLSEEDKVE. N-linked (GlcNAc...) asparagine glycosylation is present at Asn-360. Over residues 420-430 the composition is skewed to acidic residues; the sequence is DSEDEGDDLFV. Basic and acidic residues-rich tracts occupy residues 431-442 and 451-461; these read EEPKTNDVKDSE and GEEKDIQESRK. Asn-631 carries an N-linked (GlcNAc...) asparagine glycan. Residues 661–677 show a composition bias toward basic and acidic residues; it reads EDGTDAEQARAIRRPQE. Acidic residues predominate over residues 692-701; the sequence is DEEEEEEEGD. Polar residues predominate over residues 715 to 726; sequence VSAQQSRENSPS. The span at 791-800 shows a compositional bias: basic and acidic residues; that stretch reads EESHLADMRA. Phosphoserine is present on Ser-856. Over residues 1030-1039 the composition is skewed to basic and acidic residues; that stretch reads GWARPGEERQ. 2 stretches are compositionally biased toward polar residues: residues 1040–1054 and 1115–1127; these read PPQQ…TGDL and QPVT…SEVS. A compositionally biased stretch (basic and acidic residues) spans 1128-1137; sequence QKPDTKKDID. Residues 1172–1192 lie within the membrane without spanning it; that stretch reads AFGSLYAFILYLSKMLLATLP. Over 1193–1202 the chain is Lumenal; the sequence is DNVQPGPDFY. Residues 1203–1223 traverse the membrane as a helical segment; that stretch reads GLPWQPVIITAVLGIVSFAIF. Residues 1224-1930 lie on the Cytoplasmic side of the membrane; sequence SWRTILVVKS…DRSQASKPTP (707 aa). 2 coiled-coil regions span residues 1236 to 1329 and 1359 to 1422; these read YQVT…KNQD and LNEA…EIAL. Residues 1238–1677 are mediates interaction with MIA2; it reads VTEKQISEKL…VIVKPMPGRP (440 aa). Residues 1447–1472 form a disordered region; sequence ESEDPDKGGNESDDLANGETGGDRSE. Ser-1458 is subject to Phosphoserine. A coiled-coil region spans residues 1514-1662; sequence NLEDQIKKLE…LLEMTQKMAM (149 aa). 3 disordered regions span residues 1669–1796, 1801–1820, and 1840–1930; these read IVKP…VPLM, PPPI…FGPR, and APGV…KPTP. The span at 1677–1694 shows a compositional bias: polar residues; the sequence is PNTQNPPRRGLLSQNGSF. Phosphoserine is present on residues Ser-1693 and Ser-1705. Over residues 1706–1715 the composition is skewed to pro residues; it reads PPLPAEPPGR. Basic and acidic residues predominate over residues 1722–1738; it reads SRRDTPRSEFGSLDRHL. A phosphoserine mark is found at Ser-1733, Ser-1754, Ser-1766, and Ser-1770. The span at 1760 to 1773 shows a compositional bias: low complexity; that stretch reads PVVNSSSRSSSPAK. The interval 1776–1930 is proline-rich domain (PRD); mediates interaction with the COPII coat subunits SEC23A and SEC23B; sequence DEGKVNMAPK…DRSQASKPTP (155 aa). Residues 1801–1811 show a composition bias toward pro residues; it reads PPPIRYGPPPQ. Arg-1805 is modified (asymmetric dimethylarginine). An SEC16A-interacting region (SIR); required for its localization to endoplasmic reticulum exit sites and for its interaction with SEC16A region spans residues 1809 to 1869; sequence PPQLCGGPFG…GHTPFRPPGS (61 aa). Over residues 1846-1858 the composition is skewed to basic and acidic residues; it reads GKRDLPLDPREFL. Residues 1881–1898 show a composition bias toward pro residues; that stretch reads RLPPPTHGPQEYPPPPPA. The residue at position 1915 (Ser-1915) is a Phosphoserine. Residues 1915 to 1930 show a composition bias toward polar residues; it reads SPSSVQDRSQASKPTP.

It belongs to the MIA/OTOR family. Tango1 subfamily. In terms of assembly, interacts with MIA2. Interacts (via SH3 domain) with COL7A1. Interacts with the COPII coat subunits SEC23A, SEC23B and maybe SEC24C. May interact with APOB and MIA2. Interacts with SEC16A.

The protein resides in the endoplasmic reticulum membrane. Plays a role in the transport of cargos that are too large to fit into COPII-coated vesicles and require specific mechanisms to be incorporated into membrane-bound carriers and exported from the endoplasmic reticulum. This protein is required for collagen VII (COL7A1) secretion by loading COL7A1 into transport carriers. It may participate in cargo loading of COL7A1 at endoplasmic reticulum exit sites by binding to COPII coat subunits Sec23/24 and guiding SH3-bound COL7A1 into a growing carrier. Does not play a role in global protein secretion and is apparently specific to COL7A1 cargo loading. However, it may participate in secretion of other proteins in cells that do not secrete COL7A1. It is also specifically required for the secretion of lipoproteins by participating in their export from the endoplasmic reticulum. Required for correct assembly of COPII coat components at endoplasmic reticulum exit sites (ERES) and for the localization of SEC16A and membrane-bound ER-resident complexes consisting of MIA2 and PREB/SEC12 to ERES. This is Transport and Golgi organization protein 1 homolog from Mus musculus (Mouse).